An 85-amino-acid polypeptide reads, in one-letter code: Probable weak neurotoxin 3FTx-Lio1 (85 aa).

Residues 1-18 (MKAVILSLVAAFLYSGYT) form the signal peptide. 5 disulfide bridges follow: C21–C42, C24–C29, C35–C60, C64–C75, and C76–C81.

The protein belongs to the three-finger toxin family. Ancestral subfamily. As to expression, expressed by the venom gland.

Its subcellular location is the secreted. The protein is Probable weak neurotoxin 3FTx-Lio1 of Erythrolamprus poecilogyrus (Water snake).